The following is a 729-amino-acid chain: Glycine--tRNA ligase (729 aa).

The transit peptide at 1–33 (MPCLLPSLLRATRAALPLLSPPRVVAASASQRL) directs the protein to the mitochondrion. The region spanning 53–109 (LLAPLRLAVRQQGDFVRKLKEDKAPQVDVDRAVAELKARKRVLEAKELALQPKDDIV) is the WHEP-TRS domain. An N6-acetyllysine modification is found at lysine 194. Glutamate 289 provides a ligand contact to glycine. Residues 321 to 323 (RNE) and 332 to 333 (RV) contribute to the ATP site. Residue glutamate 340 participates in glycine binding. At tyrosine 443 the chain carries Phosphotyrosine. 447 to 448 (EI) serves as a coordination point for ATP. Lysine 491 carries the post-translational modification N6-acetyllysine. 566–568 (EPS) is a glycine binding site. Arginine 573 is a binding site for ATP. Serine 690 carries the post-translational modification Phosphoserine. Threonine 726 carries the post-translational modification Phosphothreonine.

This sequence belongs to the class-II aminoacyl-tRNA synthetase family. As to quaternary structure, homodimer.

The protein resides in the cytoplasm. It localises to the mitochondrion. The protein localises to the cell projection. It is found in the axon. Its subcellular location is the secreted. The protein resides in the extracellular exosome. The enzyme catalyses tRNA(Gly) + glycine + ATP = glycyl-tRNA(Gly) + AMP + diphosphate. It catalyses the reaction 2 ATP + H(+) = P(1),P(4)-bis(5'-adenosyl) tetraphosphate + diphosphate. Its function is as follows. Catalyzes the ATP-dependent ligation of glycine to the 3'-end of its cognate tRNA, via the formation of an aminoacyl-adenylate intermediate (Gly-AMP). Also produces diadenosine tetraphosphate (Ap4A), a universal pleiotropic signaling molecule needed for cell regulation pathways, by direct condensation of 2 ATPs. Thereby, may play a special role in Ap4A homeostasis. In Mus musculus (Mouse), this protein is Glycine--tRNA ligase (Gars1).